A 270-amino-acid polypeptide reads, in one-letter code: B3 domain-containing protein Os03g0212300 (270 aa).

DNA-binding regions (TF-B3) lie at residues 13–110 (FEFF…FDET) and 158–265 (VTLR…RKAD).

It is found in the nucleus. This Oryza sativa subsp. japonica (Rice) protein is B3 domain-containing protein Os03g0212300.